The sequence spans 1025 residues: Multidrug resistance protein MdtC (1025 aa).

12 helical membrane passes run 3-23 (FFALFIYRPVATILLSVAITL), 333-353 (EVEQTLIISVALVILVVFLFL), 360-380 (IIPAVAVPVSLIGTFAAMYLC), 387-407 (LSLMALTIATGFVVDDAIVVL), 431-451 (VGFTVLSMSLSLVAVFLPLLL), 463-483 (FAVTLSVAIGISLLVSLTLTP), 528-548 (LVGVVLLGTIALNIWLYISIP), 853-873 (VILIIAAIATVYIVLGILYES), 875-895 (VHPLTILSTLPSAGVGALLAL), 897-917 (LFNAPFSLIALIGIMLLIGIV), 953-973 (PIMMTTLAALFGALPLVLSGG), and 984-1004 (ITIVGGLVMSQLLTLYTTPVV).

This sequence belongs to the resistance-nodulation-cell division (RND) (TC 2.A.6) family. MdtC subfamily. In terms of assembly, part of a tripartite efflux system composed of MdtA, MdtB and MdtC. MdtC forms a heteromultimer with MdtB.

Its subcellular location is the cell inner membrane. Its function is as follows. The MdtABC tripartite complex confers resistance against novobiocin and deoxycholate. This chain is Multidrug resistance protein MdtC, found in Escherichia coli O1:K1 / APEC.